A 779-amino-acid polypeptide reads, in one-letter code: Kazrin (779 aa).

A coiled-coil region spans residues 79–261; the sequence is AQVLLREEVV…LATLTKDVPK (183 aa). A disordered region spans residues 295 to 366; that stretch reads QQTLYHSHPP…PGPVQKSLHN (72 aa). Ser-356, Ser-371, and Ser-391 each carry phosphoserine. The interval 403–429 is disordered; that stretch reads KSLDPGLFDDSDSQCSPTRHSLSLSEG. Polar residues predominate over residues 415–426; sequence SQCSPTRHSLSL. SAM domains follow at residues 450-515, 528-592, and 616-683; these read WKAG…YRDA, DHHW…LYQV, and WTNQ…STIF. Residues 685 to 779 are disordered; it reads PSNSTGIRES…GYGSLEVTNV (95 aa). The segment covering 736-746 has biased composition (basic and acidic residues); the sequence is SSKEPDFHDDY.

This sequence belongs to the kazrin family. In terms of tissue distribution, expressed in skin interfollicular epidermis and hair follicles. Expressed in tongue epithelium basal suprabasal layers.

It is found in the cell junction. The protein localises to the nucleus. The protein resides in the cytoplasm. It localises to the cytoskeleton. Its function is as follows. Component of the cornified envelope of keratinocytes. May be involved in the interplay between adherens junctions and desmosomes. The function in the nucleus is not known. The protein is Kazrin (Kazn) of Mus musculus (Mouse).